A 1955-amino-acid polypeptide reads, in one-letter code: 227 kDa spindle- and centromere-associated protein (1955 aa).

Coiled coils occupy residues 82–129, 152–317, 385–1747, and 1770–1813; these read KKRI…NDDV, EWAS…ELES, VRNI…LIAL, and ERIV…ERFI. Disordered stretches follow at residues 1865–1896 and 1912–1955; these read PTEQ…SYTY and MTSS…TFSE. Positions 1878 to 1896 are enriched in polar residues; it reads RTSSTIKSSEGTTRESYTY. A compositionally biased stretch (basic residues) spans 1938 to 1948; it reads RKSRPATRKQQ.

Its subcellular location is the cytoplasm. It localises to the cytoskeleton. It is found in the microtubule organizing center. The protein localises to the centrosome. The protein resides in the chromosome. Its subcellular location is the centromere. It localises to the kinetochore. It is found in the spindle. In terms of biological role, may play a role in the organization of the spindle apparatus and its interaction with the centromeres. This chain is 227 kDa spindle- and centromere-associated protein (PUMA1), found in Parascaris univalens (Nematode worm).